The sequence spans 371 residues: tRNA-specific 2-thiouridylase MnmA (371 aa).

ATP contacts are provided by residues 7–14 and Met-33; that span reads GLSGGVDS. The interval 103 to 105 is interaction with target base in tRNA; it reads NPD. Cys-108 (nucleophile) is an active-site residue. Cys-108 and Cys-201 are disulfide-bonded. Residue Gly-133 participates in ATP binding. The tract at residues 151–153 is interaction with tRNA; the sequence is KDQ. Catalysis depends on Cys-201, which acts as the Cysteine persulfide intermediate. Residues 308-309 are interaction with tRNA; that stretch reads RY.

It belongs to the MnmA/TRMU family.

The protein localises to the cytoplasm. The catalysed reaction is S-sulfanyl-L-cysteinyl-[protein] + uridine(34) in tRNA + AH2 + ATP = 2-thiouridine(34) in tRNA + L-cysteinyl-[protein] + A + AMP + diphosphate + H(+). Functionally, catalyzes the 2-thiolation of uridine at the wobble position (U34) of tRNA, leading to the formation of s(2)U34. This Mycoplasmopsis pulmonis (strain UAB CTIP) (Mycoplasma pulmonis) protein is tRNA-specific 2-thiouridylase MnmA.